We begin with the raw amino-acid sequence, 457 residues long: uncharacterized protein (457 aa).

The next 12 membrane-spanning stretches (helical) occupy residues 18–38 (VMTV…PYLV), 44–64 (GAYV…MILV), 101–121 (MGLL…GWVI), 158–178 (IIFY…KGII), 188–208 (LMPL…TLPG), 228–248 (LFIF…GVLI), 273–293 (IIAV…GIEP), 294–314 (NAGP…LWAG), 316–336 (FFAI…SITI), 355–375 (AIVL…ILGD), 396–416 (SGNI…GFVL), and 433–453 (IKIW…VIFI).

Belongs to the sodium:neurotransmitter symporter (SNF) (TC 2.A.22) family.

It is found in the cell membrane. In terms of biological role, putative sodium-dependent transporter. This is an uncharacterized protein from Haemophilus influenzae (strain ATCC 51907 / DSM 11121 / KW20 / Rd).